The chain runs to 926 residues: Staphylococcal nuclease domain-containing protein 1 (926 aa).

The span at 1 to 17 shows a compositional bias: low complexity; that stretch reads MATAANTATAAGAAKDA. Residues 1–24 are disordered; it reads MATAANTATAAGAAKDAPPAPTKS. TNase-like domains follow at residues 23–167, 195–333, 346–505, and 535–674; these read KSLS…KWSP, NPVK…QWQD, KDFS…LHAK, and LRTE…IWTN. A Tudor domain is found at 749-807; that stretch reads TPKRGDLVAAQFTLDNQWYRAKVERVQGSNATVLYIDYGNKETLPTNRLAALPPAFSSE. The segment at 760-788 is involved in dimethylarginine binding; sequence FTLDNQWYRAKVERVQGSNATVLYIDYGN.

As to quaternary structure, associates with the RNA-induced silencing complex (RISC). Interacts with the RISC components AGO2, Fmr1 and vig. Interacts with piwi. Expressed in adult ovaries and testis (at protein level).

The protein localises to the cytoplasm. It localises to the nucleus. It catalyses the reaction Endonucleolytic cleavage to nucleoside 3'-phosphates and 3'-phosphooligonucleotide end-products.. Endonuclease which shows activity towards both DNA and RNA substrates. Has a role in translation regulation throught its association with the with the RNA-induced silencing complex (RISC). Plays a role in spermatogenesis probably by negatively regulating piwi expression in the germline. Together with piwi, might be involved in transposon repression in the germline. The chain is Staphylococcal nuclease domain-containing protein 1 from Drosophila melanogaster (Fruit fly).